A 461-amino-acid polypeptide reads, in one-letter code: Protein eva-1 (461 aa).

The signal sequence occupies residues 1–22; the sequence is MNMHIVSPVLLLFWFGIIVTDG. An SUEL-type lectin domain is found at 55 to 160; sequence ACDGERITLS…KYLQMAYGCI (106 aa). The chain crosses the membrane as a helical span at residues 370 to 390; it reads VMCIVLAVSMAAIVVLSACII. The tract at residues 397-429 is disordered; that stretch reads NKDSSRSSRRSRSRRSLETSKLVSSNYGGSITP. Polar residues predominate over residues 415–429; that stretch reads TSKLVSSNYGGSITP.

The protein belongs to the EVA1 family. As to quaternary structure, interacts with sax-3. Interacts with slt-1. Interacts (via the SUEL-type lectin domain) with madd-4. Interacts (via the transmembrane domain) with unc-40.

The protein resides in the cell membrane. Its function is as follows. Acts as a receptor for slt-1. Required for the guidance of the AVM pioneer axon to the ventral nerve cord. Acts as a unc-40 coreceptor to enhance the sensitivity of unc-40 to the madd-4 midline guidance cue to guide muscle arm extensions (muscle arms) and AVM mechanosensory axons towards the dorsoventral midline. The chain is Protein eva-1 (eva-1) from Caenorhabditis elegans.